The primary structure comprises 629 residues: Putative polypeptide N-acetylgalactosaminyltransferase 10 (629 aa).

The Cytoplasmic portion of the chain corresponds to 1-12 (MGLSRYLSRRHH). A helical; Signal-anchor for type II membrane protein membrane pass occupies residues 13-33 (WVIQYCALLLFLYFIYSYVAV). The Lumenal portion of the chain corresponds to 34 to 629 (SNDAPRLNEE…RQANEHKELE (596 aa)). N-linked (GlcNAc...) asparagine glycans are attached at residues N143 and N177. Intrachain disulfides connect C154–C385, C376–C454, C493–C510, C539–C556, and C582–C598. The interval 163–275 (LPTVSVIFPF…YNWLPPLLDP (113 aa)) is catalytic subdomain A. Substrate-binding residues include D204 and R236. Mn(2+) contacts are provided by D259 and H261. The interval 331–393 (PFDSPVMAGG…PCSRVAHIYR (63 aa)) is catalytic subdomain B. Position 362 (W362) interacts with substrate. H390 is a binding site for Mn(2+). R393 contacts substrate. The tract at residues 393 to 406 (RCKYAPFKNAGMGD) is flexible loop. Residues 526–629 (TRWHDIRPKG…RQANEHKELE (104 aa)) form the Ricin B-type lectin domain.

Belongs to the glycosyltransferase 2 family. GalNAc-T subfamily. The cofactor is Mn(2+).

It localises to the golgi apparatus membrane. The catalysed reaction is L-seryl-[protein] + UDP-N-acetyl-alpha-D-galactosamine = a 3-O-[N-acetyl-alpha-D-galactosaminyl]-L-seryl-[protein] + UDP + H(+). The enzyme catalyses L-threonyl-[protein] + UDP-N-acetyl-alpha-D-galactosamine = a 3-O-[N-acetyl-alpha-D-galactosaminyl]-L-threonyl-[protein] + UDP + H(+). It participates in protein modification; protein glycosylation. Its function is as follows. May catalyze the initial reaction in O-linked oligosaccharide biosynthesis, the transfer of an N-acetyl-D-galactosamine residue to a serine or threonine residue on the protein receptor. The sequence is that of Putative polypeptide N-acetylgalactosaminyltransferase 10 from Caenorhabditis briggsae.